We begin with the raw amino-acid sequence, 252 residues long: 3-dehydroquinate dehydratase (252 aa).

3-dehydroquinate-binding positions include S21, 46–48 (EWR), and R82. Residue H143 is the Proton donor/acceptor of the active site. K170 acts as the Schiff-base intermediate with substrate in catalysis. Residues R213, S232, and Q236 each coordinate 3-dehydroquinate.

Belongs to the type-I 3-dehydroquinase family. In terms of assembly, homodimer.

It catalyses the reaction 3-dehydroquinate = 3-dehydroshikimate + H2O. The protein operates within metabolic intermediate biosynthesis; chorismate biosynthesis; chorismate from D-erythrose 4-phosphate and phosphoenolpyruvate: step 3/7. Its function is as follows. Involved in the third step of the chorismate pathway, which leads to the biosynthesis of aromatic amino acids. Catalyzes the cis-dehydration of 3-dehydroquinate (DHQ) and introduces the first double bond of the aromatic ring to yield 3-dehydroshikimate. The protein is 3-dehydroquinate dehydratase of Escherichia coli O17:K52:H18 (strain UMN026 / ExPEC).